Reading from the N-terminus, the 541-residue chain is Alpha-zingiberene synthase (541 aa).

Residues Asp-296, Asp-300, Asp-437, Thr-441, and Glu-445 each contribute to the Mg(2+) site. The DDXXD motif motif lies at Asp-296–Asp-300.

It belongs to the terpene synthase family. The cofactor is Mg(2+). It depends on Mn(2+) as a cofactor.

The enzyme catalyses (2E,6E)-farnesyl diphosphate = alpha-zingiberene + diphosphate. It functions in the pathway secondary metabolite biosynthesis; terpenoid biosynthesis. In terms of biological role, sesquiterpene synthase that catalyzes the formation of alpha-zingiberene and other sesquiterpenes from trans,trans-farnesyl diphosphate (FPP). May have an additional monoterpene synthase activity. This Ocimum basilicum (Sweet basil) protein is Alpha-zingiberene synthase (ZIS).